The sequence spans 511 residues: Ectonucleoside triphosphate diphosphohydrolase 1 (511 aa).

At Met-1–Asn-16 the chain is on the cytoplasmic side. The chain crosses the membrane as a helical span at residues Ile-17–Leu-37. The Extracellular portion of the chain corresponds to Thr-38–Tyr-478. Residues Asn-46–Gly-171 form an N-terminal lobe region. N-linked (GlcNAc...) asparagine glycosylation occurs at Asn-73. Cys-84 and Cys-108 are joined by a disulfide. The active-site Proton acceptor is Glu-174. Residues Gln-205–Met-441 form a C-terminal lobe region. Residues Asn-226, Asn-291, and Asn-333 are each glycosylated (N-linked (GlcNAc...) asparagine). Disulfide bonds link Cys-254/Cys-300 and Cys-281/Cys-324. A disulfide bridge connects residues Cys-337 and Cys-342. Residue Asn-374 is glycosylated (N-linked (GlcNAc...) asparagine). A disulfide bridge connects residues Cys-391 and Cys-414. Residues Asn-429 and Asn-458 are each glycosylated (N-linked (GlcNAc...) asparagine). The chain crosses the membrane as a helical span at residues Ile-479–Ile-499. Residues Phe-500–Val-511 are Cytoplasmic-facing.

It belongs to the GDA1/CD39 NTPase family. As to quaternary structure, homodimer; disulfide-linked. The cofactor is Ca(2+). Mg(2+) is required as a cofactor. N-glycosylated. Post-translationally, the N-terminus is blocked. In terms of processing, palmitoylated on Cys-13; which is required for caveola targeting. In terms of tissue distribution, expressed in primary neurons and astrocytes, kidney, liver, muscle, thymus, lung and spleen.

It is found in the membrane. The protein resides in the caveola. The catalysed reaction is a ribonucleoside 5'-triphosphate + 2 H2O = a ribonucleoside 5'-phosphate + 2 phosphate + 2 H(+). It carries out the reaction a ribonucleoside 5'-triphosphate + H2O = a ribonucleoside 5'-diphosphate + phosphate + H(+). It catalyses the reaction a ribonucleoside 5'-diphosphate + H2O = a ribonucleoside 5'-phosphate + phosphate + H(+). The enzyme catalyses ATP + 2 H2O = AMP + 2 phosphate + 2 H(+). The catalysed reaction is ATP + H2O = ADP + phosphate + H(+). It carries out the reaction ADP + H2O = AMP + phosphate + H(+). It catalyses the reaction CTP + 2 H2O = CMP + 2 phosphate + 2 H(+). The enzyme catalyses CTP + H2O = CDP + phosphate + H(+). The catalysed reaction is CDP + H2O = CMP + phosphate + H(+). It carries out the reaction GTP + 2 H2O = GMP + 2 phosphate + 2 H(+). It catalyses the reaction GTP + H2O = GDP + phosphate + H(+). The enzyme catalyses GDP + H2O = GMP + phosphate + H(+). The catalysed reaction is ITP + 2 H2O = IMP + 2 phosphate + 2 H(+). It carries out the reaction ITP + H2O = IDP + phosphate + H(+). It catalyses the reaction IDP + H2O = IMP + phosphate + H(+). The enzyme catalyses UTP + 2 H2O = UMP + 2 phosphate + 2 H(+). The catalysed reaction is UTP + H2O = UDP + phosphate + H(+). It carries out the reaction UDP + H2O = UMP + phosphate + H(+). Functionally, catalyzes the hydrolysis of both di- and triphosphate nucleotides (NDPs and NTPs) and hydrolyze NTPs to nucleotide monophosphates (NMPs) in two distinct successive phosphate-releasing steps, with NDPs as intermediates and participates in the regulation of extracellular levels of nucleotides. By hydrolyzing proinflammatory ATP and platelet-activating ADP to AMP, it blocks platelet aggregation and supports blood flow. The protein is Ectonucleoside triphosphate diphosphohydrolase 1 of Rattus norvegicus (Rat).